Consider the following 292-residue polypeptide: Phosphatidylglycerol--prolipoprotein diacylglyceryl transferase (292 aa).

6 helical membrane-spanning segments follow: residues Ile25 to Ala45, Phe70 to Trp90, Ala101 to Ile121, Phe138 to Ile158, Phe193 to Leu213, and Gly255 to Leu275. Residue Arg153 participates in a 1,2-diacyl-sn-glycero-3-phospho-(1'-sn-glycerol) binding.

It belongs to the Lgt family.

The protein resides in the cell inner membrane. The enzyme catalyses L-cysteinyl-[prolipoprotein] + a 1,2-diacyl-sn-glycero-3-phospho-(1'-sn-glycerol) = an S-1,2-diacyl-sn-glyceryl-L-cysteinyl-[prolipoprotein] + sn-glycerol 1-phosphate + H(+). It functions in the pathway protein modification; lipoprotein biosynthesis (diacylglyceryl transfer). Functionally, catalyzes the transfer of the diacylglyceryl group from phosphatidylglycerol to the sulfhydryl group of the N-terminal cysteine of a prolipoprotein, the first step in the formation of mature lipoproteins. This is Phosphatidylglycerol--prolipoprotein diacylglyceryl transferase from Bartonella quintana (strain Toulouse) (Rochalimaea quintana).